The following is a 1121-amino-acid chain: Brassinosteroid LRR receptor kinase BRI1 (1121 aa).

An N-terminal signal peptide occupies residues methionine 1–alanine 24. The short motif at cysteine 54–cysteine 61 is the Cys pair 1 element. LRR repeat units follow at residues leucine 90–arginine 114, glycine 116–serine 142, cysteine 144–glycine 167, phenylalanine 170–valine 193, valine 197–glycine 221, glutamine 223–aspartate 243, cysteine 244–leucine 268, threonine 269–lysine 292, glutamine 294–leucine 317, proline 318–aspartate 341, asparagine 343–cysteine 367, serine 369–leucine 391, glycine 392–isoleucine 415, glutamine 416–cysteine 439, lysine 441–leucine 463, serine 464–cysteine 487, and serine 489–glutamine 511. Asparagine 102 carries N-linked (GlcNAc...) asparagine glycosylation. A glycan (N-linked (GlcNAc...) asparagine) is linked at asparagine 151. A glycan (N-linked (GlcNAc...) asparagine) is linked at asparagine 218. Residues asparagine 251, asparagine 275, asparagine 280, and asparagine 307 are each glycosylated (N-linked (GlcNAc...) asparagine). Asparagine 366 and asparagine 381 each carry an N-linked (GlcNAc...) asparagine glycan. Asparagine 473 and asparagine 501 each carry an N-linked (GlcNAc...) asparagine glycan. Position 525 (tyrosine 525) interacts with brassinolide. Residues glycine 541–asparagine 564 form an LRR 18 repeat. N-linked (GlcNAc...) asparagine glycosylation is present at asparagine 564. Brassinolide is bound at residue tyrosine 569. Asparagine 580 carries N-linked (GlcNAc...) asparagine glycosylation. LRR repeat units lie at residues asparagine 580–aspartate 603, methionine 604–alanine 628, lysine 629–alanine 651, and leucine 652–threonine 676. Asparagine 658, asparagine 665, and asparagine 684 each carry an N-linked (GlcNAc...) asparagine glycan. Positions cysteine 689–cysteine 696 match the Cys pair 2 motif. The interval leucine 693–arginine 712 is disordered. The helical transmembrane segment at serine 719–glycine 739 threads the bilayer. A Protein kinase domain is found at phenylalanine 807–isoleucine 1083. ATP contacts are provided by residues isoleucine 813–valine 821, lysine 835, aspartate 881–methionine 883, serine 887–aspartate 890, aspartate 933–asparagine 938, and aspartate 951. Catalysis depends on aspartate 933, which acts as the Proton acceptor.

This sequence belongs to the protein kinase superfamily. Ser/Thr protein kinase family. In terms of assembly, interacts with BIP103 and BIP131. Interacts with BAK1. Interacts with BSK3. Interacts with SERK2. As to expression, highly expressed in shoots. Expressed at low levels in roots.

It is found in the cell membrane. The catalysed reaction is L-seryl-[protein] + ATP = O-phospho-L-seryl-[protein] + ADP + H(+). It catalyses the reaction L-threonyl-[protein] + ATP = O-phospho-L-threonyl-[protein] + ADP + H(+). Functionally, receptor kinase involved brassinosteroid (BR) signal transduction. Regulates, in response to BR binding, a signaling cascade involved in plant development, promotion of cell elongation and flowering. Activates BR signaling by targeting and phosphorylating BSK3, a positive regulator of BR signaling. Forms at the plasma membrane a receptor complex with BAK1 which is activated in response to brassinolide. Phosphorylates BAK1. Phosphorylates REM4.1, which reduces REM4.1 binding affinity to BAK1 and allows the formation and subsequent activation of the BRI1-BAK1 receptor complex. Functions in various growth and developmental processes, such as internode elongation, bending of the lamina joint and skotomorphogenesis. Functions in internode elongation by inducing the formation of the intercalary meristem and the longitudinal elongation of internode cells. Involved in organ development through the control of cell division and elongation. Does not seem essential for organ pattern formation or organ initiation. In Oryza sativa subsp. japonica (Rice), this protein is Brassinosteroid LRR receptor kinase BRI1.